Consider the following 282-residue polypeptide: tRNA (guanine-N(7)-)-methyltransferase (282 aa).

The interval methionine 1 to arginine 36 is disordered. Positions lysine 10–lysine 29 are enriched in basic and acidic residues. Residues glycine 100, glutamate 123 to isoleucine 124, asparagine 158 to threonine 159, and cysteine 178 each bind S-adenosyl-L-methionine. Aspartate 181 is a catalytic residue. Threonine 256 to glutamate 258 provides a ligand contact to S-adenosyl-L-methionine.

It belongs to the class I-like SAM-binding methyltransferase superfamily. TrmB family. Forms a complex with trm82.

Its subcellular location is the nucleus. It catalyses the reaction guanosine(46) in tRNA + S-adenosyl-L-methionine = N(7)-methylguanosine(46) in tRNA + S-adenosyl-L-homocysteine. It participates in tRNA modification; N(7)-methylguanine-tRNA biosynthesis. Catalyzes the formation of N(7)-methylguanine at position 46 (m7G46) in tRNA. The chain is tRNA (guanine-N(7)-)-methyltransferase (trm8) from Botryotinia fuckeliana (strain B05.10) (Noble rot fungus).